The following is a 486-amino-acid chain: Glutamate--tRNA ligase (486 aa).

Positions 11–21 (PSPTGFLHIGG) match the 'HIGH' region motif. Zn(2+) contacts are provided by Cys108, Cys110, Cys136, and His138. Positions 253–257 (KLSKR) match the 'KMSKS' region motif. Lys256 lines the ATP pocket.

Belongs to the class-I aminoacyl-tRNA synthetase family. Glutamate--tRNA ligase type 1 subfamily. As to quaternary structure, monomer. Zn(2+) serves as cofactor.

The protein resides in the cytoplasm. It carries out the reaction tRNA(Glu) + L-glutamate + ATP = L-glutamyl-tRNA(Glu) + AMP + diphosphate. Catalyzes the attachment of glutamate to tRNA(Glu) in a two-step reaction: glutamate is first activated by ATP to form Glu-AMP and then transferred to the acceptor end of tRNA(Glu). The polypeptide is Glutamate--tRNA ligase (Lysinibacillus sphaericus (strain C3-41)).